The chain runs to 445 residues: Glutamate-1-semialdehyde 2,1-aminomutase (445 aa).

Lys-264 bears the N6-(pyridoxal phosphate)lysine mark.

Belongs to the class-III pyridoxal-phosphate-dependent aminotransferase family. HemL subfamily. The cofactor is pyridoxal 5'-phosphate.

It localises to the cytoplasm. It catalyses the reaction (S)-4-amino-5-oxopentanoate = 5-aminolevulinate. It functions in the pathway porphyrin-containing compound metabolism; protoporphyrin-IX biosynthesis; 5-aminolevulinate from L-glutamyl-tRNA(Glu): step 2/2. This chain is Glutamate-1-semialdehyde 2,1-aminomutase, found in Halobacterium salinarum (strain ATCC 29341 / DSM 671 / R1).